A 179-amino-acid chain; its full sequence is uncharacterized protein (179 aa).

It belongs to the CAPAB/TerDEXZ family.

This is an uncharacterized protein from Synechocystis sp. (strain ATCC 27184 / PCC 6803 / Kazusa).